A 664-amino-acid polypeptide reads, in one-letter code: UvrABC system protein B (664 aa).

One can recognise a Helicase ATP-binding domain in the interval 25 to 412 (KGLVSGLTDQ…LQVVEQLVRP (388 aa)). Residue 38–45 (GVTGSGKT) coordinates ATP. Positions 91–114 (YYDYYQPEAYVPQKDMYIEKDSDI) match the Beta-hairpin motif. The Helicase C-terminal domain maps to 428–594 (QIDDLLEEVK…GIRKAIKDIN (167 aa)). The UVR domain occupies 620–655 (ARLIKELESQMKKAAKNLEFERAALIRDRVVELRAA).

This sequence belongs to the UvrB family. In terms of assembly, forms a heterotetramer with UvrA during the search for lesions. Interacts with UvrC in an incision complex.

Its subcellular location is the cytoplasm. In terms of biological role, the UvrABC repair system catalyzes the recognition and processing of DNA lesions. A damage recognition complex composed of 2 UvrA and 2 UvrB subunits scans DNA for abnormalities. Upon binding of the UvrA(2)B(2) complex to a putative damaged site, the DNA wraps around one UvrB monomer. DNA wrap is dependent on ATP binding by UvrB and probably causes local melting of the DNA helix, facilitating insertion of UvrB beta-hairpin between the DNA strands. Then UvrB probes one DNA strand for the presence of a lesion. If a lesion is found the UvrA subunits dissociate and the UvrB-DNA preincision complex is formed. This complex is subsequently bound by UvrC and the second UvrB is released. If no lesion is found, the DNA wraps around the other UvrB subunit that will check the other stand for damage. This is UvrABC system protein B from Dehalococcoides mccartyi (strain CBDB1).